Consider the following 393-residue polypeptide: tRNA-specific 2-thiouridylase MnmA (393 aa).

Residues 19–26 (AMSGGVDS) and Leu-45 contribute to the ATP site. Cys-113 functions as the Nucleophile in the catalytic mechanism. Cys-113 and Cys-210 are disulfide-bonded. Residue Gly-137 participates in ATP binding. The interaction with tRNA stretch occupies residues 160-162 (RDQ). The Cysteine persulfide intermediate role is filled by Cys-210.

The protein belongs to the MnmA/TRMU family.

The protein localises to the cytoplasm. It carries out the reaction S-sulfanyl-L-cysteinyl-[protein] + uridine(34) in tRNA + AH2 + ATP = 2-thiouridine(34) in tRNA + L-cysteinyl-[protein] + A + AMP + diphosphate + H(+). Functionally, catalyzes the 2-thiolation of uridine at the wobble position (U34) of tRNA, leading to the formation of s(2)U34. The protein is tRNA-specific 2-thiouridylase MnmA of Bradyrhizobium diazoefficiens (strain JCM 10833 / BCRC 13528 / IAM 13628 / NBRC 14792 / USDA 110).